A 472-amino-acid chain; its full sequence is N(6)-adenine-specific methyltransferase METTL4 (472 aa).

It belongs to the MT-A70-like family.

It localises to the nucleus. The protein resides in the cytoplasm. It is found in the cytosol. The protein localises to the mitochondrion matrix. It catalyses the reaction a 2'-O-methyladenosine in U2 snRNA + S-adenosyl-L-methionine = an N(6)-methyl-2'-O-methyladenosine in U2 snRNA + S-adenosyl-L-homocysteine + H(+). The enzyme catalyses a 2'-deoxyadenosine in DNA + S-adenosyl-L-methionine = an N(6)-methyl-2'-deoxyadenosine in DNA + S-adenosyl-L-homocysteine + H(+). In terms of biological role, n(6)-adenine-specific methyltransferase that can methylate both RNAs and DNA. Acts as a N(6)-adenine-specific RNA methyltransferase by catalyzing formation of N6,2'-O-dimethyladenosine (m6A(m)) on internal positions of U2 small nuclear RNA (snRNA): methylates the 6th position of adenine residues with a pre-deposited 2'-O-methylation. Internal m6A(m) methylation of snRNAs regulates RNA splicing. Also able to act as a N(6)-adenine-specific DNA methyltransferase by mediating methylation of DNA on the 6th position of adenine (N(6)-methyladenosine). The existence of N(6)-methyladenosine (m6A) on DNA is however unclear in mammals, and additional evidences are required to confirm the role of the N(6)-adenine-specific DNA methyltransferase activity of METTL4 in vivo. Acts as a regulator of mitochondrial transcript levels and mitochondrial DNA (mtDNA) copy number by mediating mtDNA N(6)-methylation: m6A on mtDNA reduces transcription by repressing TFAM DNA-binding and bending. N(6)-methyladenosine deposition by METTL4 regulates Polycomb silencing by triggering ubiquitination and degradation of sensor proteins ASXL1 and MPND, leading to inactivation of the PR-DUB complex and subsequent preservation of Polycomb silencing. This Homo sapiens (Human) protein is N(6)-adenine-specific methyltransferase METTL4.